The sequence spans 610 residues: Sodium-coupled monocarboxylate transporter 1 (610 aa).

Over 1-9 (MDTPRGIGT) the chain is Extracellular. Residues 10–30 (FVVWDYVVFAGMLVISAAIGI) form a helical membrane-spanning segment. Residues 31–51 (YYAFAGGGQQTSKDFLMGGRR) are Cytoplasmic-facing. The chain crosses the membrane as a helical span at residues 52–72 (MTAVPVALSLTASFMSAVTVL). The Extracellular segment spans residues 73–83 (GTPSEVYRFGA). The helical transmembrane segment at 84–104 (IFSIFAFTYFFVVVISAEVFL) threads the bilayer. The Cytoplasmic portion of the chain corresponds to 105-132 (PVFYKLGITSTYEYLELRFNKCVRLCGT). A helical membrane pass occupies residues 133-153 (VLFIVQTILYTGIVIYAPALA). The Extracellular segment spans residues 154–161 (LNQVTGFD). Residues 162-182 (LWGAVVATGVVCTFYCTLGGL) form a helical membrane-spanning segment. Residues 183–189 (KAVIWTD) lie on the Cytoplasmic side of the membrane. A helical transmembrane segment spans residues 190–210 (VFQVGIMVAGFASVIIQAVVM). The Extracellular portion of the chain corresponds to 211–239 (QGGISTILNDAYDGGRLNFWNFNPNPLQR). A helical membrane pass occupies residues 240–260 (HTFWTIIIGGTFTWTSIYGVN). Topologically, residues 261-279 (QSQVQRYISCKSRFQAKLS) are cytoplasmic. A helical transmembrane segment spans residues 280 to 300 (LYINLVGLWAILTCSVFCGLA). Topologically, residues 301-336 (LYSRYHDCDPWTAKKVSAPDQLMPYLVLDILQDYPG) are extracellular. A helical membrane pass occupies residues 337 to 359 (LPGLFVACAYSGTLSTVSSSINA). Topologically, residues 360–389 (LAAVTVEDLIKPYFRSLSERSLSWISQGMS) are cytoplasmic. Residues 390–410 (VVYGALCIGMAALASLMGALL) form a helical membrane-spanning segment. The Extracellular portion of the chain corresponds to 411–415 (QAALS). A helical membrane pass occupies residues 416-436 (VFGMVGGPLMGLFALGILVPF). Topologically, residues 437-439 (ANS) are cytoplasmic. The helical transmembrane segment at 440-460 (IGALVGLMAGFAISLWVGIGA) threads the bilayer. The Extracellular segment spans residues 461 to 518 (QIYPPLPERTLPLHLDIQGCNSTYNETNLMTTTEMPFTTSVFQIYNVQRTPLMDNWYS). N-linked (GlcNAc...) asparagine glycosylation is present at Asn-485. Residues 519–539 (LSYLYFSTVGTLVTLLVGILV) form a helical membrane-spanning segment. Residues 540–610 (SLSTGGRKQN…QSGKSNGTRL (71 aa)) lie on the Cytoplasmic side of the membrane. Positions 585–610 (GGTDNPAFNHIELNSDQSGKSNGTRL) are disordered. Over residues 596–610 (ELNSDQSGKSNGTRL) the composition is skewed to polar residues. Residues 608-610 (TRL) carry the PDZ-binding motif.

The protein belongs to the sodium:solute symporter (SSF) (TC 2.A.21) family. As to quaternary structure, interacts (via PDZ-binding motif) with PDZK1 (via PDZ domains 1 and 3); interaction increases nicotinate transport activity of SLC5A8. Expressed in normal thyroid, localized at the apical pole of thyroid cells facing the colloid lumen, but expression profoundly decreased in thyroid carcinomas. Expressed in normal colon but absent in colon aberrant crypt foci and colon cancers. Present in normal kidney cortex, brain, prostate, gastric mucosa and breast tissue but was significantly down-regulated in primary gliomas, gastric cancer, prostate tumors and breast tumors.

It localises to the apical cell membrane. The catalysed reaction is (S)-lactate(out) + 2 Na(+)(out) = (S)-lactate(in) + 2 Na(+)(in). It catalyses the reaction propanoate(out) + 2 Na(+)(out) = propanoate(in) + 2 Na(+)(in). It carries out the reaction pyruvate(out) + 2 Na(+)(out) = pyruvate(in) + 2 Na(+)(in). The enzyme catalyses acetate(out) + 2 Na(+)(out) = acetate(in) + 2 Na(+)(in). The catalysed reaction is butanoate(out) + 2 Na(+)(out) = butanoate(in) + 2 Na(+)(in). It catalyses the reaction nicotinate(out) + 2 Na(+)(out) = nicotinate(in) + 2 Na(+)(in). It carries out the reaction (R)-3-hydroxybutanoate(out) + 2 Na(+)(out) = (R)-3-hydroxybutanoate(in) + 2 Na(+)(in). The enzyme catalyses acetoacetate(out) + 2 Na(+)(out) = acetoacetate(in) + 2 Na(+)(in). The catalysed reaction is 4-methyl-2-oxopentanoate(out) + 2 Na(+)(out) = 4-methyl-2-oxopentanoate(in) + 2 Na(+)(in). It catalyses the reaction 5-oxo-L-proline(out) + 2 Na(+)(out) = 5-oxo-L-proline(in) + 2 Na(+)(in). It carries out the reaction iodide(out) = iodide(in). The enzyme catalyses chloride(in) = chloride(out). The catalysed reaction is nitrate(in) = nitrate(out). It catalyses the reaction bromide(in) = bromide(out). Its activity is regulated as follows. Increase of iodide influx inhibited by addition of perchlorate (NaClO(4)), a competitive inhibitor of iodide uptake catalyzed by sodium iodide symporter (NIS). Cotransport of monocarboxylates and nicotinate strongly inhibited by probenecid, nonsteroid anti-inflammatory drugs (ibuprofen, fenoprofen, ketprofen, naproxen) in a Na(+)-dependent manner or by prolonged exposure to external concentrations of monocarboxylates. In terms of biological role, acts as an electrogenic sodium (Na(+)) and chloride (Cl-)-dependent sodium-coupled solute transporter, including transport of monocarboxylates (short-chain fatty acids including L-lactate, D-lactate, pyruvate, acetate, propionate, valerate and butyrate), mocarboxylate drugs (nicotinate, benzoate, salicylate and 5-aminosalicylate) and ketone bodies (beta-D-hydroxybutyrate, acetoacetate and alpha-ketoisocaproate), with a Na(+):substrate stoichiometry of between 4:1 and 2:1. Catalyzes passive carrier mediated diffusion of iodide. Mediates iodide transport from the thyrocyte into the colloid lumen through the apical membrane. May be responsible for the absorption of D-lactate and monocarboxylate drugs from the intestinal tract. Acts as a tumor suppressor, suppressing colony formation in colon cancer, prostate cancer and glioma cell lines. May play a critical role in the entry of L-lactate and ketone bodies into neurons by a process driven by an electrochemical Na(+) gradient and hence contribute to the maintenance of the energy status and function of neurons. Mediates sodium-coupled electrogenic transport of pyroglutamate (5-oxo-L-proline). Can mediate the transport of chloride, bromide, iodide and nitrate ions when the external concentration of sodium ions is reduced. This Homo sapiens (Human) protein is Sodium-coupled monocarboxylate transporter 1.